The following is a 238-amino-acid chain: Dolichyldiphosphatase 1 (238 aa).

Transmembrane regions (helical) follow at residues 33 to 53 (LAYL…LIIF), 100 to 120 (PSSH…FLYL), 130 to 150 (FLDL…AFLV), and 162 to 182 (WSQV…WFIF).

The protein belongs to the dolichyldiphosphatase family.

The protein resides in the endoplasmic reticulum membrane. It catalyses the reaction a di-trans,poly-cis-dolichyl diphosphate + H2O = a di-trans,poly-cis-dolichyl phosphate + phosphate + H(+). It functions in the pathway protein modification; protein glycosylation. Its function is as follows. Required for efficient N-glycosylation. Necessary for maintaining optimal levels of dolichol-linked oligosaccharides. Hydrolyzes dolichyl pyrophosphate at a very high rate and dolichyl monophosphate at a much lower rate. Does not act on phosphatidate. This is Dolichyldiphosphatase 1 (DOLPP1) from Plecturocebus moloch (Dusky titi monkey).